We begin with the raw amino-acid sequence, 57 residues long: MNVRGNQCIMSIRVFLKAGESSLSFAIKWLKRFEATTKKNQYIQNGWPLKDGNKKRK.

Its function is as follows. Proetin of unknown function whose overexpression causes growth inhibition. Overexpression increases the expression of ergosterol synthesis genes. This is an uncharacterized protein from Saccharomyces cerevisiae (strain ATCC 204508 / S288c) (Baker's yeast).